Here is a 148-residue protein sequence, read N- to C-terminus: UPF0756 membrane protein NMCC_1816 (148 aa).

The next 4 membrane-spanning stretches (helical) occupy residues 13 to 35 (LILLGVVSNNNSITISATILLLM), 50 to 70 (HGLNLGIILLTIGVLSPLVSG), 80 to 100 (FLNFKMISAVFIGIFVAWLAG), and 121 to 141 (VIGVAFMGGIPVGPLIAAGIL).

This sequence belongs to the UPF0756 family.

It localises to the cell membrane. The protein is UPF0756 membrane protein NMCC_1816 of Neisseria meningitidis serogroup C (strain 053442).